A 209-amino-acid chain; its full sequence is Outer-membrane lipoprotein carrier protein (209 aa).

The N-terminal stretch at methionine 1 to alanine 21 is a signal peptide.

It belongs to the LolA family. Monomer.

It is found in the periplasm. In terms of biological role, participates in the translocation of lipoproteins from the inner membrane to the outer membrane. Only forms a complex with a lipoprotein if the residue after the N-terminal Cys is not an aspartate (The Asp acts as a targeting signal to indicate that the lipoprotein should stay in the inner membrane). In Xanthomonas campestris pv. campestris (strain 8004), this protein is Outer-membrane lipoprotein carrier protein.